Consider the following 460-residue polypeptide: GTPase Der (460 aa).

2 EngA-type G domains span residues 3-167 (FTFA…PEPD) and 189-364 (IRVA…ATWN). Residues 9-16 (GRPNVGKS), 56-60 (DTAGL), 119-122 (NKSE), 195-202 (GRPNAGKS), 242-246 (DTAGL), and 307-310 (NKWD) contribute to the GTP site. One can recognise a KH-like domain in the interval 365–449 (RRVPTAALNR…PVRIMLREKA (85 aa)).

Belongs to the TRAFAC class TrmE-Era-EngA-EngB-Septin-like GTPase superfamily. EngA (Der) GTPase family. As to quaternary structure, associates with the 50S ribosomal subunit.

In terms of biological role, GTPase that plays an essential role in the late steps of ribosome biogenesis. The polypeptide is GTPase Der (Rhodopseudomonas palustris (strain BisA53)).